The chain runs to 566 residues: Urease subunit alpha (566 aa).

The 439-residue stretch at 128–566 (GGVDTHIHFI…LPMAQRYFLF (439 aa)) folds into the Urease domain. H133, H135, and K216 together coordinate Ni(2+). The residue at position 216 (K216) is an N6-carboxylysine. H218 lines the substrate pocket. Residues H245 and H271 each contribute to the Ni(2+) site. The Proton donor role is filled by H319. D359 is a Ni(2+) binding site.

This sequence belongs to the metallo-dependent hydrolases superfamily. Urease alpha subunit family. May form a heterohexamer of 3 UreC (alpha) and 3 UreAB (gamma/beta) subunits. May also form a heterotrimer of UreA (gamma), UreB (beta) and UreC (alpha) subunits. Three heterotrimers associate to form the active enzyme. It depends on Ni cation as a cofactor. Carboxylation allows a single lysine to coordinate two nickel ions.

It is found in the cytoplasm. It catalyses the reaction urea + 2 H2O + H(+) = hydrogencarbonate + 2 NH4(+). It functions in the pathway nitrogen metabolism; urea degradation; CO(2) and NH(3) from urea (urease route): step 1/1. The sequence is that of Urease subunit alpha from Pseudomonas savastanoi pv. phaseolicola (strain 1448A / Race 6) (Pseudomonas syringae pv. phaseolicola (strain 1448A / Race 6)).